The primary structure comprises 370 residues: Phosphoserine aminotransferase (370 aa).

At methionine 1 the chain carries N-acetylmethionine. The O-phospho-L-serine site is built by histidine 44 and arginine 45. The residue at position 51 (lysine 51) is an N6-acetyllysine. Pyridoxal 5'-phosphate contacts are provided by glycine 79, cysteine 80, and tryptophan 107. Position 127 is an N6-acetyllysine (lysine 127). Residues threonine 156, aspartate 176, and glutamine 199 each contribute to the pyridoxal 5'-phosphate site. The residue at position 200 (lysine 200) is an N6-(pyridoxal phosphate)lysine. Residues asparagine 241 and threonine 242 each contribute to the pyridoxal 5'-phosphate site. An N6-acetyllysine mark is found at lysine 269, lysine 318, and lysine 323. The residue at position 331 (serine 331) is a Phosphoserine. Lysine 333 is modified (N6-acetyllysine). O-phospho-L-serine is bound by residues histidine 335, arginine 336, and arginine 342.

This sequence belongs to the class-V pyridoxal-phosphate-dependent aminotransferase family. SerC subfamily. As to quaternary structure, homodimer. It depends on pyridoxal 5'-phosphate as a cofactor.

It carries out the reaction O-phospho-L-serine + 2-oxoglutarate = 3-phosphooxypyruvate + L-glutamate. Its pathway is amino-acid biosynthesis; L-serine biosynthesis; L-serine from 3-phospho-D-glycerate: step 2/3. Functionally, involved in L-serine biosynthesis via the phosphorylated pathway, a three-step pathway converting the glycolytic intermediate 3-phospho-D-glycerate into L-serine. Catalyzes the second step, that is the pyridoxal 5'-phosphate-dependent transamination of 3-phosphohydroxypyruvate and L-glutamate to O-phosphoserine (OPS) and alpha-ketoglutarate. The protein is Phosphoserine aminotransferase (PSAT1) of Oryctolagus cuniculus (Rabbit).